The primary structure comprises 470 residues: Putative multidrug resistance protein MdtD (470 aa).

At 1–11 the chain is on the periplasmic side; that stretch reads MTELPDNTRWQ. A helical transmembrane segment spans residues 12–32; it reads LWIVALGFFMQSLDTTIVNTA. The Cytoplasmic portion of the chain corresponds to 33-48; it reads LPSMAKSLGESPLHMH. A helical membrane pass occupies residues 49–69; that stretch reads MVVVSYVLTVAVMLPASGWLA. The Periplasmic segment spans residues 70–76; sequence DKIGVRN. The helical transmembrane segment at 77–97 threads the bilayer; the sequence is IFFAAIVLFTLGSLFCALSGT. At 98-101 the chain is on the cytoplasmic side; it reads LNQL. A helical transmembrane segment spans residues 102-124; it reads VLARVLQGVGGAMMVPVGRLTVM. Topologically, residues 125 to 137 are periplasmic; sequence KIVPRAQYMAAMT. A helical transmembrane segment spans residues 138-158; that stretch reads FVTLPGQIGPLLGPALGGVLV. Topologically, residues 159–164 are cytoplasmic; that stretch reads EYASWH. Residues 165 to 185 traverse the membrane as a helical segment; sequence WIFLINIPVGIVGAMATFMLM. At 186-196 the chain is on the periplasmic side; it reads PNYTIETRRFD. A helical transmembrane segment spans residues 197 to 217; that stretch reads LPGFLLLAIGMAVLTLALDGS. Residues 218-221 are Cytoplasmic-facing; it reads KSMG. Residues 222 to 242 form a helical membrane-spanning segment; that stretch reads ISPWTLAGLAAGGAAAILLYL. The Periplasmic segment spans residues 243-262; that stretch reads LHAKKNSGALFSLRLFCTPT. The chain crosses the membrane as a helical span at residues 263-283; it reads FSLGLLGSFAGRIGSGMLPFM. Residues 284–285 lie on the Cytoplasmic side of the membrane; sequence TP. Residues 286-306 form a helical membrane-spanning segment; sequence VFLQIGLGFSPFHAGLMMIPM. The Periplasmic portion of the chain corresponds to 307-341; the sequence is VLGSMGMKRIVVQIVNRFGYRRVLVATTLGLALVS. The chain crosses the membrane as a helical span at residues 342 to 362; the sequence is LLFMSVALLGWYYLLPLVLLL. Over 363 to 395 the chain is Cytoplasmic; sequence QGMVNSARFSSMNTLTLKDLPDTLASSGNSLLS. A helical membrane pass occupies residues 396–416; that stretch reads MIMQLSMSIGVTIAGMLLGMF. The Periplasmic portion of the chain corresponds to 417 to 430; it reads GQQHIGIDSSATHH. The chain crosses the membrane as a helical span at residues 431–451; sequence VFMYTWLCMAVIIALPAIIFA. Over 452–470 the chain is Cytoplasmic; sequence RVPNDTQQNMVISRRKRSL.

It belongs to the major facilitator superfamily. TCR/Tet family.

It is found in the cell inner membrane. The sequence is that of Putative multidrug resistance protein MdtD from Salmonella paratyphi B (strain ATCC BAA-1250 / SPB7).